The chain runs to 193 residues: ATP-dependent protease subunit HslV (193 aa).

Threonine 12 is a catalytic residue. 3 residues coordinate Na(+): alanine 167, cysteine 170, and threonine 173.

This sequence belongs to the peptidase T1B family. HslV subfamily. A double ring-shaped homohexamer of HslV is capped on each side by a ring-shaped HslU homohexamer. The assembly of the HslU/HslV complex is dependent on binding of ATP.

The protein localises to the cytoplasm. It carries out the reaction ATP-dependent cleavage of peptide bonds with broad specificity.. Its activity is regulated as follows. Allosterically activated by HslU binding. Protease subunit of a proteasome-like degradation complex believed to be a general protein degrading machinery. In Bartonella quintana (strain Toulouse) (Rochalimaea quintana), this protein is ATP-dependent protease subunit HslV.